Reading from the N-terminus, the 130-residue chain is Lysozyme C, kidney isozyme (130 aa).

Residues 1-130 (KVFERCELAR…LTSYIQGCGV (130 aa)) form the C-type lysozyme domain. Disulfide bonds link Cys6/Cys128, Cys30/Cys116, Cys65/Cys81, and Cys77/Cys95. Catalysis depends on residues Glu35 and Asp53.

It belongs to the glycosyl hydrolase 22 family. As to quaternary structure, monomer.

It is found in the secreted. It catalyses the reaction Hydrolysis of (1-&gt;4)-beta-linkages between N-acetylmuramic acid and N-acetyl-D-glucosamine residues in a peptidoglycan and between N-acetyl-D-glucosamine residues in chitodextrins.. In terms of biological role, lysozymes have primarily a bacteriolytic function; those in tissues and body fluids are associated with the monocyte-macrophage system and enhance the activity of immunoagents. This Ovis aries (Sheep) protein is Lysozyme C, kidney isozyme.